Reading from the N-terminus, the 440-residue chain is Muscarinic acetylcholine receptor M2 (440 aa).

Residues 1–19 form a helical membrane-spanning segment; sequence VLVAGSLSLVTIIGNILVM. The Cytoplasmic segment spans residues 20-33; it reads VSIKVNRHLQTVNN. The chain crosses the membrane as a helical span at residues 34–54; the sequence is YFLFSLACADLIIGVFSMNLY. Residues 55–71 lie on the Extracellular side of the membrane; the sequence is TLYTVIGYWPLGPVVCD. Cysteine 70 and cysteine 150 are oxidised to a cystine. A helical membrane pass occupies residues 72-93; that stretch reads LWLALDYVVSNASVMNLLIISF. An Important for signaling motif is present at residues 94-96; it reads DRY. Residues 94-113 lie on the Cytoplasmic side of the membrane; that stretch reads DRYFCVTKPLTYPVKRTTKM. A helical membrane pass occupies residues 114 to 136; that stretch reads AGMMIAAAWVLSFILWAPAILFW. Residues 137–158 are Extracellular-facing; it reads QFIVGVRTVEDGECYIQFFSNA. A helical transmembrane segment spans residues 159–183; that stretch reads AVTFGTAIAAFYLPVIIMTVLYWHI. At 184-361 the chain is on the cytoplasmic side; the sequence is SRASKSRIKK…PPSREKKVTR (178 aa). Residues 192–329 form a disordered region; that stretch reads KKDKKEPVAN…VVGSSGQNGD (138 aa). Serine 206 bears the Phosphoserine mark. The segment covering 228–244 has biased composition (basic and acidic residues); the sequence is GLEHNKIQNGKAPRDPV. Composition is skewed to polar residues over residues 258-267, 278-287, and 308-327; these read NDSTSVSAVA, DENTVSTSLG, and SDSC…SGQN. The chain crosses the membrane as a helical span at residues 362-384; that stretch reads TILAILLAFIITWAPYNVMVLIN. The Extracellular portion of the chain corresponds to 385 to 392; that stretch reads TFCAPCIP. Cysteines 387 and 390 form a disulfide. The chain crosses the membrane as a helical span at residues 393–416; sequence NTVWTIGYWLCYINSTINPACYAL. The short motif at 410–414 is the Important for signaling element; that stretch reads NPACY. At 417–440 the chain is on the cytoplasmic side; that stretch reads CNATFKKTFKHLLMCHYKNIGATR. Phosphothreonine is present on residues threonine 420, threonine 424, and threonine 439.

It belongs to the G-protein coupled receptor 1 family. Muscarinic acetylcholine receptor subfamily. CHRM2 sub-subfamily. Interacts with ARRB1 and ARRB2. Interacts with RACK1; the interaction regulates CHRM2 internalization. Phosphorylated in response to agonist treatment.

The protein localises to the cell membrane. It localises to the postsynaptic cell membrane. Functionally, the muscarinic acetylcholine receptor mediates various cellular responses, including inhibition of adenylate cyclase, breakdown of phosphoinositides and modulation of potassium channels through the action of G proteins. Primary transducing effect is adenylate cyclase inhibition. Signaling promotes phospholipase C activity, leading to the release of inositol trisphosphate (IP3); this then triggers calcium ion release into the cytosol. The protein is Muscarinic acetylcholine receptor M2 (CHRM2) of Pan troglodytes (Chimpanzee).